Here is a 371-residue protein sequence, read N- to C-terminus: GPI mannosyltransferase 1 (371 aa).

The next 8 helical transmembrane spans lie at 64-84 (FPSW…WLMI), 120-140 (AILG…SVWL), 144-164 (ILGF…AFLV), 190-210 (IVVG…YLYG), 248-268 (ASSL…PLVF), 290-310 (VCTS…LPNS), 318-338 (LICL…AYNL), and 344-364 (SVFI…VYEL).

It belongs to the PIGM family.

The protein localises to the endoplasmic reticulum membrane. It functions in the pathway glycolipid biosynthesis; glycosylphosphatidylinositol-anchor biosynthesis. Mannosyltransferase involved in glycosylphosphatidylinositol-anchor biosynthesis. Transfers the first alpha-1,4-mannose to GlcN-acyl-PI during GPI precursor assembly. Required for cell wall integrity. This Schizosaccharomyces pombe (strain 972 / ATCC 24843) (Fission yeast) protein is GPI mannosyltransferase 1 (gpi14).